The sequence spans 512 residues: Probable cytosol aminopeptidase (512 aa).

Residues Lys-281 and Asp-286 each contribute to the Mn(2+) site. Residue Lys-293 is part of the active site. Residues Asp-304, Asp-363, and Glu-365 each contribute to the Mn(2+) site. Arg-367 is a catalytic residue.

It belongs to the peptidase M17 family. Mn(2+) serves as cofactor.

Its subcellular location is the cytoplasm. The catalysed reaction is Release of an N-terminal amino acid, Xaa-|-Yaa-, in which Xaa is preferably Leu, but may be other amino acids including Pro although not Arg or Lys, and Yaa may be Pro. Amino acid amides and methyl esters are also readily hydrolyzed, but rates on arylamides are exceedingly low.. The enzyme catalyses Release of an N-terminal amino acid, preferentially leucine, but not glutamic or aspartic acids.. Presumably involved in the processing and regular turnover of intracellular proteins. Catalyzes the removal of unsubstituted N-terminal amino acids from various peptides. The chain is Probable cytosol aminopeptidase from Koribacter versatilis (strain Ellin345).